The primary structure comprises 286 residues: ATP synthase gamma chain (286 aa).

This sequence belongs to the ATPase gamma chain family. F-type ATPases have 2 components, CF(1) - the catalytic core - and CF(0) - the membrane proton channel. CF(1) has five subunits: alpha(3), beta(3), gamma(1), delta(1), epsilon(1). CF(0) has three main subunits: a, b and c.

It is found in the cell inner membrane. Its function is as follows. Produces ATP from ADP in the presence of a proton gradient across the membrane. The gamma chain is believed to be important in regulating ATPase activity and the flow of protons through the CF(0) complex. The chain is ATP synthase gamma chain from Pseudomonas putida (strain ATCC 700007 / DSM 6899 / JCM 31910 / BCRC 17059 / LMG 24140 / F1).